The chain runs to 122 residues: Acidic phospholipase A2 Tpu-E6b (122 aa).

7 cysteine pairs are disulfide-bonded: cysteine 26/cysteine 115, cysteine 28/cysteine 44, cysteine 43/cysteine 95, cysteine 49/cysteine 122, cysteine 50/cysteine 88, cysteine 57/cysteine 81, and cysteine 75/cysteine 86. Tyrosine 27, glycine 29, and glycine 31 together coordinate Ca(2+). Histidine 47 is a catalytic residue. Ca(2+) is bound at residue aspartate 48. Residue aspartate 89 is part of the active site.

Monomer. It depends on Ca(2+) as a cofactor. Expressed by the venom gland.

It localises to the secreted. The catalysed reaction is a 1,2-diacyl-sn-glycero-3-phosphocholine + H2O = a 1-acyl-sn-glycero-3-phosphocholine + a fatty acid + H(+). Functionally, snake venom phospholipase A2 (PLA2) that weakly inhibits ADP-induced platelet aggregation when tested on platelet rich plasma from human and rabbit blood (15-25% of inhibition at 5-10 ug of enzyme). Exhibits moderate hydrolytic activities toward L-dipalmitoyl phosphatidylcholine. PLA2 catalyzes the calcium-dependent hydrolysis of the 2-acyl groups in 3-sn-phosphoglycerides. In Craspedocephalus puniceus (Flat-nosed pitviper), this protein is Acidic phospholipase A2 Tpu-E6b.